The following is a 113-amino-acid chain: Large ribosomal subunit protein bL17 (113 aa).

Belongs to the bacterial ribosomal protein bL17 family. In terms of assembly, part of the 50S ribosomal subunit. Contacts protein L32.

The chain is Large ribosomal subunit protein bL17 from Symbiobacterium thermophilum (strain DSM 24528 / JCM 14929 / IAM 14863 / T).